A 495-amino-acid polypeptide reads, in one-letter code: MAFSLVSILLSIALAWYVGYIINQLTSRNSKRPPIVFHWIPFVGSAVAYGMDPYVFFRECRAKYGDVFTFVCMGRKMTAFLGVQGNDFLFNGKLADLNAEEAYSHLTTPVFGKDVVYDIPNHVFMEHKKFIKSGLGFSQFRSYVPLILNEMDAFLSTSPDFGPGKEGVADLLKTMPVMTIYTASRTLQGAEVRKGFDAGFADLYHDLDQGFSPVNFVFPWLPLPRNRRRDRAHKIMQKTYLKIIKDRRSSTENPGTDMIWTLMSCKYRDGRPLKEHEIAGMMIALLMAGQHTSAATIVWVLALLGSKPEIIEMLWEEQKRVVGENLELKFDQYKDMPLLNYVIQETLRLHPPIHSHMRKVKRDLPVPGSKIVIPANNYLLAAPGLTATEEEYFTHATDFDPKRWNDRVNEDENAEQIDYGYGLVTKGAASPYLPFGAGRHRCIGEQFAYMHLSTIISKFVHDYTWTLIGKVPNVDYSSMVALPLGPVKIAWKRRN.

Residues 2 to 22 (AFSLVSILLSIALAWYVGYII) traverse the membrane as a helical segment. Residue Cys-442 participates in heme binding.

It belongs to the cytochrome P450 family. As to quaternary structure, interacts with dap1. Heme serves as cofactor.

The protein localises to the endoplasmic reticulum. It localises to the membrane. The catalysed reaction is a 14alpha-methyl steroid + 3 reduced [NADPH--hemoprotein reductase] + 3 O2 = a Delta(14) steroid + formate + 3 oxidized [NADPH--hemoprotein reductase] + 4 H2O + 4 H(+). The enzyme catalyses a 14alpha-methyl steroid + reduced [NADPH--hemoprotein reductase] + O2 = a 14alpha-hydroxymethyl steroid + oxidized [NADPH--hemoprotein reductase] + H2O + H(+). It carries out the reaction a 14alpha-hydroxymethyl steroid + reduced [NADPH--hemoprotein reductase] + O2 = a 14alpha-formyl steroid + oxidized [NADPH--hemoprotein reductase] + 2 H2O + H(+). It catalyses the reaction a 14alpha-formyl steroid + reduced [NADPH--hemoprotein reductase] + O2 = a Delta(14) steroid + formate + oxidized [NADPH--hemoprotein reductase] + H2O + 2 H(+). The catalysed reaction is lanosterol + 3 reduced [NADPH--hemoprotein reductase] + 3 O2 = 4,4-dimethyl-5alpha-cholesta-8,14,24-trien-3beta-ol + formate + 3 oxidized [NADPH--hemoprotein reductase] + 4 H2O + 4 H(+). The enzyme catalyses lanosterol + reduced [NADPH--hemoprotein reductase] + O2 = 32-hydroxylanosterol + oxidized [NADPH--hemoprotein reductase] + H2O + H(+). It carries out the reaction 32-hydroxylanosterol + reduced [NADPH--hemoprotein reductase] + O2 = 32-oxolanosterol + oxidized [NADPH--hemoprotein reductase] + 2 H2O + H(+). It catalyses the reaction 32-oxolanosterol + reduced [NADPH--hemoprotein reductase] + O2 = 4,4-dimethyl-5alpha-cholesta-8,14,24-trien-3beta-ol + formate + oxidized [NADPH--hemoprotein reductase] + H2O + 2 H(+). The catalysed reaction is eburicol + 3 reduced [NADPH--hemoprotein reductase] + 3 O2 = 14-demethyleburicol + formate + 3 oxidized [NADPH--hemoprotein reductase] + 4 H2O + 4 H(+). The enzyme catalyses eburicol + reduced [NADPH--hemoprotein reductase] + O2 = 32-hydroxyeburicol + oxidized [NADPH--hemoprotein reductase] + H2O + H(+). It carries out the reaction 32-hydroxyeburicol + reduced [NADPH--hemoprotein reductase] + O2 = 32-oxoeburicol + oxidized [NADPH--hemoprotein reductase] + 2 H2O + H(+). It catalyses the reaction 32-oxoeburicol + reduced [NADPH--hemoprotein reductase] + O2 = 14-demethyleburicol + formate + oxidized [NADPH--hemoprotein reductase] + H2O + 2 H(+). It participates in steroid biosynthesis; zymosterol biosynthesis; zymosterol from lanosterol: step 1/6. Its pathway is steroid metabolism; ergosterol biosynthesis. In terms of biological role, sterol 14alpha-demethylase that plays a critical role in the third module of ergosterol biosynthesis pathway, being ergosterol the major sterol component in fungal membranes that participates in a variety of functions. The third module or late pathway involves the ergosterol synthesis itself through consecutive reactions that mainly occur in the endoplasmic reticulum (ER) membrane. In filamentous fungi, during the initial step of this module, lanosterol (lanosta-8,24-dien-3beta-ol) can be metabolized to eburicol. Sterol 14alpha-demethylase catalyzes the three-step oxidative removal of the 14alpha-methyl group (C-32) of both these sterols in the form of formate, and converts eburicol and lanosterol to 14-demethyleburicol (4,4,24-trimethylergosta-8,14,24(28)-trienol) and 4,4-dimethyl-5alpha-cholesta-8,14,24-trien-3beta-ol, respectively, which are further metabolized by other enzymes in the pathway to ergosterol. Can also use substrates not intrinsic to fungi, such as 24,25-dihydrolanosterol (DHL), producing 4,4-dimethyl-8,14-cholestadien-3-beta-ol, but at lower rates than the endogenous substrates. The chain is Lanosterol 14-alpha demethylase erg11 from Schizosaccharomyces pombe (strain 972 / ATCC 24843) (Fission yeast).